A 69-amino-acid chain; its full sequence is Large ribosomal subunit protein bL31 (69 aa).

4 residues coordinate Zn(2+): C17, C19, C37, and C40.

The protein belongs to the bacterial ribosomal protein bL31 family. Type A subfamily. Part of the 50S ribosomal subunit. Requires Zn(2+) as cofactor.

Its function is as follows. Binds the 23S rRNA. The chain is Large ribosomal subunit protein bL31 from Caldicellulosiruptor saccharolyticus (strain ATCC 43494 / DSM 8903 / Tp8T 6331).